Reading from the N-terminus, the 322-residue chain is Ferrochelatase (322 aa).

Fe cation is bound by residues His-194 and Glu-275.

This sequence belongs to the ferrochelatase family.

Its subcellular location is the cytoplasm. It carries out the reaction heme b + 2 H(+) = protoporphyrin IX + Fe(2+). Its pathway is porphyrin-containing compound metabolism; protoheme biosynthesis; protoheme from protoporphyrin-IX: step 1/1. Functionally, catalyzes the ferrous insertion into protoporphyrin IX. The chain is Ferrochelatase from Yersinia enterocolitica.